The sequence spans 857 residues: Median body protein (857 aa).

2 coiled-coil regions span residues 169–546 (HNAL…MRTE) and 571–793 (LAHL…TKAM).

The protein localises to the cytoplasm. Its subcellular location is the cytoskeleton. Structural component of the ventral disk involved in maintanance of a domed conformation of the disk required for proper attachment. May have a role in immobilizing the microtubules between cell divisions. The protein is Median body protein of Giardia intestinalis (strain ATCC 50803 / WB clone C6) (Giardia lamblia).